Here is a 546-residue protein sequence, read N- to C-terminus: Metal transporter Nramp6.2 (546 aa).

A run of 8 helical transmembrane segments spans residues 50–70, 83–103, 128–150, 154–176, 187–207, 233–253, 270–290, and 333–353; these read FLPY…PGNL, ELLW…SLAA, SLWL…GTAF, ILFH…LLLG, LLIS…LSYV, IALL…ALVL, YFLI…VSII, and IYAI…TYAG. N-linked (GlcNAc...) asparagine glycosylation is present at asparagine 371. 4 helical membrane-spanning segments follow: residues 374–394, 397–417, 433–453, and 473–493; these read TRCI…SSGA, LIII…IPLL, IYII…NVYY, and VIIG…IIYL.

This sequence belongs to the NRAMP (TC 2.A.55) family.

Its subcellular location is the membrane. In terms of biological role, probable divalent metal transporter. The chain is Metal transporter Nramp6.2 from Populus trichocarpa (Western balsam poplar).